Consider the following 250-residue polypeptide: uncharacterized protein (250 aa).

It belongs to the glycosyltransferase 2 family.

This is an uncharacterized protein from Haemophilus influenzae (strain ATCC 51907 / DSM 11121 / KW20 / Rd).